Consider the following 155-residue polypeptide: S-ribosylhomocysteine lyase (155 aa).

Positions 57, 61, and 124 each coordinate Fe cation.

This sequence belongs to the LuxS family. As to quaternary structure, homodimer. Requires Fe cation as cofactor.

It carries out the reaction S-(5-deoxy-D-ribos-5-yl)-L-homocysteine = (S)-4,5-dihydroxypentane-2,3-dione + L-homocysteine. Its function is as follows. Involved in the synthesis of autoinducer 2 (AI-2) which is secreted by bacteria and is used to communicate both the cell density and the metabolic potential of the environment. The regulation of gene expression in response to changes in cell density is called quorum sensing. Catalyzes the transformation of S-ribosylhomocysteine (RHC) to homocysteine (HC) and 4,5-dihydroxy-2,3-pentadione (DPD). In Listeria monocytogenes serovar 1/2a (strain ATCC BAA-679 / EGD-e), this protein is S-ribosylhomocysteine lyase.